We begin with the raw amino-acid sequence, 333 residues long: Tetraacyldisaccharide 4'-kinase (333 aa).

60–67 (TVGGTGKT) provides a ligand contact to ATP.

Belongs to the LpxK family.

The catalysed reaction is a lipid A disaccharide + ATP = a lipid IVA + ADP + H(+). It functions in the pathway glycolipid biosynthesis; lipid IV(A) biosynthesis; lipid IV(A) from (3R)-3-hydroxytetradecanoyl-[acyl-carrier-protein] and UDP-N-acetyl-alpha-D-glucosamine: step 6/6. Functionally, transfers the gamma-phosphate of ATP to the 4'-position of a tetraacyldisaccharide 1-phosphate intermediate (termed DS-1-P) to form tetraacyldisaccharide 1,4'-bis-phosphate (lipid IVA). The polypeptide is Tetraacyldisaccharide 4'-kinase (Pseudomonas putida (strain ATCC 700007 / DSM 6899 / JCM 31910 / BCRC 17059 / LMG 24140 / F1)).